Reading from the N-terminus, the 225-residue chain is Germin-like protein 8-6 (225 aa).

The N-terminal stretch at 1–23 (MASPSSLCLLTALLALVSWQTIA) is a signal peptide. A disulfide bridge connects residues cysteine 33 and cysteine 48. One can recognise a Cupin type-1 domain in the interval 63–213 (AMLDTPRKTN…AFQVEKGTID (151 aa)). Asparagine 77 carries N-linked (GlcNAc...) asparagine glycosylation. Mn(2+) contacts are provided by histidine 110, histidine 112, and glutamate 117. Asparagine 136 is a glycosylation site (N-linked (GlcNAc...) asparagine). Residue histidine 158 participates in Mn(2+) binding.

The protein belongs to the germin family. In terms of assembly, oligomer (believed to be a pentamer but probably hexamer).

It localises to the secreted. The protein resides in the extracellular space. The protein localises to the apoplast. Its function is as follows. Plays a role in broad-spectrum disease resistance. Probably has no oxalate oxidase activity even if the active site is conserved. The polypeptide is Germin-like protein 8-6 (Oryza sativa subsp. japonica (Rice)).